Consider the following 316-residue polypeptide: 4-hydroxy-3-methylbut-2-enyl diphosphate reductase (316 aa).

C12 serves as a coordination point for [4Fe-4S] cluster. H41 and H74 together coordinate (2E)-4-hydroxy-3-methylbut-2-enyl diphosphate. Dimethylallyl diphosphate is bound by residues H41 and H74. Positions 41 and 74 each coordinate isopentenyl diphosphate. C96 is a binding site for [4Fe-4S] cluster. A (2E)-4-hydroxy-3-methylbut-2-enyl diphosphate-binding site is contributed by H124. H124 serves as a coordination point for dimethylallyl diphosphate. H124 serves as a coordination point for isopentenyl diphosphate. E126 functions as the Proton donor in the catalytic mechanism. Residue T168 coordinates (2E)-4-hydroxy-3-methylbut-2-enyl diphosphate. C198 is a [4Fe-4S] cluster binding site. The (2E)-4-hydroxy-3-methylbut-2-enyl diphosphate site is built by S226, S227, N228, and S270. Positions 226, 227, 228, and 270 each coordinate dimethylallyl diphosphate. S226, S227, N228, and S270 together coordinate isopentenyl diphosphate.

This sequence belongs to the IspH family. Requires [4Fe-4S] cluster as cofactor.

It carries out the reaction isopentenyl diphosphate + 2 oxidized [2Fe-2S]-[ferredoxin] + H2O = (2E)-4-hydroxy-3-methylbut-2-enyl diphosphate + 2 reduced [2Fe-2S]-[ferredoxin] + 2 H(+). It catalyses the reaction dimethylallyl diphosphate + 2 oxidized [2Fe-2S]-[ferredoxin] + H2O = (2E)-4-hydroxy-3-methylbut-2-enyl diphosphate + 2 reduced [2Fe-2S]-[ferredoxin] + 2 H(+). It participates in isoprenoid biosynthesis; dimethylallyl diphosphate biosynthesis; dimethylallyl diphosphate from (2E)-4-hydroxy-3-methylbutenyl diphosphate: step 1/1. It functions in the pathway isoprenoid biosynthesis; isopentenyl diphosphate biosynthesis via DXP pathway; isopentenyl diphosphate from 1-deoxy-D-xylulose 5-phosphate: step 6/6. In terms of biological role, catalyzes the conversion of 1-hydroxy-2-methyl-2-(E)-butenyl 4-diphosphate (HMBPP) into a mixture of isopentenyl diphosphate (IPP) and dimethylallyl diphosphate (DMAPP). Acts in the terminal step of the DOXP/MEP pathway for isoprenoid precursor biosynthesis. The polypeptide is 4-hydroxy-3-methylbut-2-enyl diphosphate reductase (Acinetobacter baylyi (strain ATCC 33305 / BD413 / ADP1)).